We begin with the raw amino-acid sequence, 105 residues long: Large ribosomal subunit protein bL21 (105 aa).

Belongs to the bacterial ribosomal protein bL21 family. As to quaternary structure, part of the 50S ribosomal subunit. Contacts protein L20.

In terms of biological role, this protein binds to 23S rRNA in the presence of protein L20. This is Large ribosomal subunit protein bL21 from Porphyromonas gingivalis (strain ATCC BAA-308 / W83).